A 242-amino-acid chain; its full sequence is Ubiquinone biosynthesis O-methyltransferase (242 aa).

The S-adenosyl-L-methionine site is built by Arg-44, Gly-64, Asp-85, and Met-129.

This sequence belongs to the methyltransferase superfamily. UbiG/COQ3 family.

It catalyses the reaction a 3-demethylubiquinol + S-adenosyl-L-methionine = a ubiquinol + S-adenosyl-L-homocysteine + H(+). The enzyme catalyses a 3-(all-trans-polyprenyl)benzene-1,2-diol + S-adenosyl-L-methionine = a 2-methoxy-6-(all-trans-polyprenyl)phenol + S-adenosyl-L-homocysteine + H(+). It participates in cofactor biosynthesis; ubiquinone biosynthesis. Functionally, O-methyltransferase that catalyzes the 2 O-methylation steps in the ubiquinone biosynthetic pathway. The chain is Ubiquinone biosynthesis O-methyltransferase from Salmonella choleraesuis (strain SC-B67).